Here is a 1149-residue protein sequence, read N- to C-terminus: Guanine nucleotide exchange factor DBS (1149 aa).

The 173-residue stretch at 52–224 folds into the CRAL-TRIO domain; that stretch reads AATASDEIMH…DLGGTLDYCH (173 aa). A Spectrin repeat occupies 351–456; that stretch reads LQLRHFEQGF…VTRRRGLLSK (106 aa). Ser-457, Ser-462, Ser-471, and Ser-480 each carry phosphoserine. A coiled-coil region spans residues 503 to 529; that stretch reads LETGAENKIQELNEIYKEYECILNQDL. The interval 555–627 is disordered; that stretch reads KKLAAKQTRP…RTSSTGEEEE (73 aa). Residues 583 to 594 show a composition bias toward low complexity; sequence PGSWRSSENSSS. Residues 607 to 616 show a composition bias toward basic and acidic residues; the sequence is AKSEMSEPRQ. The residue at position 621 (Ser-621) is a Phosphoserine. Thr-622 carries the post-translational modification Phosphothreonine. A DH domain is found at 632 to 812; that stretch reads LRRHVMNELL…LGILKAVNDS (181 aa). The PH domain maps to 841-950; the sequence is TDHKKGHTKV…IRKVLTSQLQ (110 aa). The tract at residues 956-1033 is disordered; sequence SQHRALEQSH…EAPEEDGGWS (78 aa). Positions 966–978 are enriched in low complexity; sequence SLPLPTPSSTSPT. Residues Ser-1033, Ser-1034, Ser-1041, and Ser-1042 each carry the phosphoserine modification. The 62-residue stretch at 1055-1116 folds into the SH3 domain; the sequence is LVPGKYTVVM…PASSLSTLLG (62 aa).

It belongs to the MCF2 family. Interacts with GTP-bound RAC1. Interacts with CDC42. Interacts with RHOA. Interacts with CCPG1, which results in specific inhibition of its exchange activity toward RHOA, but does not affect its activity on CDC42. As to expression, expressed at low levels in several hemopoietic cell lines and in thymus and spleen, and at higher levels in other tissues, particularly in brain.

The protein resides in the cytoplasm. Its subcellular location is the cell membrane. In terms of biological role, guanine nucleotide exchange factor that catalyzes guanine nucleotide exchange on RHOA and CDC42, and thereby contributes to the regulation of RHOA and CDC42 signaling pathways. Seems to lack activity with RAC1. Becomes activated and highly tumorigenic by truncation of the N-terminus. This chain is Guanine nucleotide exchange factor DBS (Mcf2l), found in Mus musculus (Mouse).